The following is a 1183-amino-acid chain: PAN2-PAN3 deadenylation complex catalytic subunit PAN2 (1183 aa).

Residues methionine 1 to isoleucine 24 form a disordered region. WD repeat units lie at residues aspartate 159–serine 207, proline 269–leucine 309, and serine 327–threonine 366. The linker stretch occupies residues phenylalanine 369 to lysine 520. The 399-residue stretch at lysine 521 to serine 919 folds into the USP domain. The region spanning isoleucine 977–tyrosine 1151 is the Exonuclease domain. Aspartate 980, glutamate 982, aspartate 1090, and aspartate 1143 together coordinate a divalent metal cation.

Belongs to the peptidase C19 family. PAN2 subfamily. As to quaternary structure, forms a heterotrimer with an asymmetric homodimer of the regulatory subunit PAN3 to form the poly(A)-nuclease (PAN) deadenylation complex. A divalent metal cation serves as cofactor.

It is found in the cytoplasm. It carries out the reaction Exonucleolytic cleavage of poly(A) to 5'-AMP.. Its activity is regulated as follows. Positively regulated by the regulatory subunit PAN3. In terms of biological role, catalytic subunit of the poly(A)-nuclease (PAN) deadenylation complex, one of two cytoplasmic mRNA deadenylases involved in mRNA turnover. PAN specifically shortens poly(A) tails of RNA and the activity is stimulated by poly(A)-binding protein PAB1. PAN deadenylation is followed by rapid degradation of the shortened mRNA tails by the CCR4-NOT complex. Deadenylated mRNAs are then degraded by two alternative mechanisms, namely exosome-mediated 3'-5' exonucleolytic degradation, or deadenylation-dependent mRNA decaping and subsequent 5'-3' exonucleolytic degradation by XRN1. May also be involved in post-transcriptional maturation of mRNA poly(A) tails. This is PAN2-PAN3 deadenylation complex catalytic subunit PAN2 from Scheffersomyces stipitis (strain ATCC 58785 / CBS 6054 / NBRC 10063 / NRRL Y-11545) (Yeast).